The following is a 163-amino-acid chain: Protein MATERNALLY EXPRESSED GENE 5 (163 aa).

The 80-residue stretch at 38 to 117 (STLYIEGLPA…DDVNVSAPAE (80 aa)) folds into the RRM domain. 2 cysteine pairs are disulfide-bonded: Cys140-Cys162 and Cys143-Cys151.

The protein belongs to the MEG family. Ubiquitous.

This is Protein MATERNALLY EXPRESSED GENE 5 (MEG5) from Zea mays (Maize).